The chain runs to 610 residues: Elongation factor 4 (610 aa).

The region spanning 11–193 (EKIRNFSIIA…QIVEKVPAPT (183 aa)) is the tr-type G domain. GTP is bound by residues 23–28 (DHGKST) and 140–143 (NKID).

This sequence belongs to the TRAFAC class translation factor GTPase superfamily. Classic translation factor GTPase family. LepA subfamily.

It is found in the cell membrane. The enzyme catalyses GTP + H2O = GDP + phosphate + H(+). Required for accurate and efficient protein synthesis under certain stress conditions. May act as a fidelity factor of the translation reaction, by catalyzing a one-codon backward translocation of tRNAs on improperly translocated ribosomes. Back-translocation proceeds from a post-translocation (POST) complex to a pre-translocation (PRE) complex, thus giving elongation factor G a second chance to translocate the tRNAs correctly. Binds to ribosomes in a GTP-dependent manner. This chain is Elongation factor 4, found in Streptococcus agalactiae serotype Ia (strain ATCC 27591 / A909 / CDC SS700).